We begin with the raw amino-acid sequence, 658 residues long: Carnitine O-palmitoyltransferase 2, mitochondrial (658 aa).

Residues 1-26 (MARLLTSSSALRWGAVSSSQSVGRAY) constitute a mitochondrion transit peptide. Residues 27–179 (SSGSPDTEYV…GYLEPEIFHL (153 aa)) lie on the Mitochondrial matrix side of the membrane. The note=Mitochondrial inner membrane intramembrane region spans 180–209 (NPAKSDTLTFRKLIRFVPSSLSWYGAYMVN). Residues 210–658 (AYPLDMSQYF…FTVLQDKPIK (449 aa)) lie on the Mitochondrial matrix side of the membrane. Histidine 373 functions as the Proton acceptor in the catalytic mechanism. 453–465 (GKELLKTQKLSPD) provides a ligand contact to CoA. (R)-carnitine-binding residues include tyrosine 487, serine 489, and threonine 500.

It belongs to the carnitine/choline acetyltransferase family.

Its subcellular location is the mitochondrion inner membrane. It carries out the reaction (R)-carnitine + hexadecanoyl-CoA = O-hexadecanoyl-(R)-carnitine + CoA. It catalyses the reaction octanoyl-CoA + (R)-carnitine = O-octanoyl-(R)-carnitine + CoA. The catalysed reaction is decanoyl-CoA + (R)-carnitine = O-decanoyl-(R)-carnitine + CoA. The enzyme catalyses dodecanoyl-CoA + (R)-carnitine = O-dodecanoyl-R-carnitine + CoA. It carries out the reaction tetradecanoyl-CoA + (R)-carnitine = O-tetradecanoyl-(R)-carnitine + CoA. It catalyses the reaction (R)-carnitine + octadecanoyl-CoA = O-octadecanoyl-(R)-carnitine + CoA. The catalysed reaction is eicosanoyl-CoA + (R)-carnitine = O-eicosanoyl-(R)-carnitine + CoA. The enzyme catalyses (9Z)-tetradecenoyl-CoA + (R)-carnitine = O-(9Z)-tetradecenoyl-(R)-carnitine + CoA. It carries out the reaction (5Z)-tetradecenoyl-CoA + (R)-carnitine = O-(5Z)-tetradecenoyl-(R)-carnitine + CoA. It catalyses the reaction (R)-carnitine + (9Z)-octadecenoyl-CoA = O-(9Z)-octadecenoyl-(R)-carnitine + CoA. The catalysed reaction is 4,8-dimethylnonanoyl-CoA + (R)-carnitine = O-4,8-dimethylnonanoyl-(R)-carnitine + CoA. It functions in the pathway lipid metabolism; fatty acid beta-oxidation. Its function is as follows. Involved in the intramitochondrial synthesis of acylcarnitines from accumulated acyl-CoA metabolites. Reconverts acylcarnitines back into the respective acyl-CoA esters that can then undergo beta-oxidation, an essential step for the mitochondrial uptake of long-chain fatty acids and their subsequent beta-oxidation in the mitochondrion. Active with medium (C8-C12) and long-chain (C14-C18) acyl-CoA esters. The chain is Carnitine O-palmitoyltransferase 2, mitochondrial (cpt2) from Xenopus tropicalis (Western clawed frog).